The following is a 419-amino-acid chain: Odorant receptor 56a (419 aa).

The Cytoplasmic portion of the chain corresponds to Met1–Leu41. The helical transmembrane segment at Leu42 to Leu62 threads the bilayer. Topologically, residues Ala63–Ala76 are extracellular. The chain crosses the membrane as a helical span at residues Thr77–Val97. Over Gln98–Thr137 the chain is Cytoplasmic. Residues Ile138–Ile158 traverse the membrane as a helical segment. Residues Tyr159–Asn196 are Extracellular-facing. A helical membrane pass occupies residues Phe197–Leu217. Topologically, residues Trp218 to Cys292 are cytoplasmic. The helical transmembrane segment at Val293 to Leu313 threads the bilayer. Residues Thr314–Tyr323 lie on the Extracellular side of the membrane. The chain crosses the membrane as a helical span at residues Phe324–Ala344. The Cytoplasmic portion of the chain corresponds to Thr345–Ala389. The helical transmembrane segment at Leu390–Phe410 threads the bilayer. Residues Asn411 to Tyr419 lie on the Extracellular side of the membrane.

The protein belongs to the insect chemoreceptor superfamily. Heteromeric odorant receptor channel (TC 1.A.69) family. Or30a subfamily. In terms of assembly, interacts with Orco. Complexes exist early in the endomembrane system in olfactory sensory neurons (OSNs), coupling these complexes to the conserved ciliary trafficking pathway. In terms of tissue distribution, expressed in olfactory sensory neurons in the antenna.

It is found in the cell membrane. Its function is as follows. Odorant receptor which mediates acceptance or avoidance behavior, depending on its substrates. The odorant receptor repertoire encodes a large collection of odor stimuli that vary widely in identity, intensity, and duration. May form a complex with Orco to form odorant-sensing units, providing sensitive and prolonged odorant signaling and calcium permeability. Specific receptor for geosmin, a microbial odorant that constitutes an ecologically relevant stimulus that alerts flies to the presence of harmful microbes and induces avoidance behavior. The polypeptide is Odorant receptor 56a (Or56a) (Drosophila melanogaster (Fruit fly)).